The following is an 854-amino-acid chain: A-kinase anchor protein 4 (854 aa).

Positions 1-188 (MMAYSDTTMM…MTAAKNTNNN (188 aa)) are excised as a propeptide. Residues S96, S130, S190, S213, S226, and S272 each carry the phosphoserine modification. The segment at 184–207 (NTNNNQSPSAPPAKPPSTQRAVIS) is disordered. Positions 219-232 (FYVNRLSSLVIQMA) are PKA-RI and PKA-RII subunit binding domain. The segment at 287–323 (RGTGEESREGGQKSFLYSELSNKSKSGDKQMSQRESK) is disordered. The segment covering 288–297 (GTGEESREGG) has biased composition (basic and acidic residues). Phosphoserine is present on S300. Y303 is subject to Phosphotyrosine. S304 and S307 each carry phosphoserine. Over residues 311 to 323 (KSGDKQMSQRESK) the composition is skewed to basic and acidic residues. Residues 336-345 (YANQVASDMM) are PKA-RI-alpha subunit binding domain. 8 positions are modified to phosphoserine: S342, S432, S443, S445, S447, S450, S464, and S492. The residue at position 506 (T506) is a Phosphothreonine. A phosphoserine mark is found at S536, S581, S627, and S703.

The protein belongs to the AKAP110 family. In terms of assembly, interacts with PRKAR1A and PRKAR2A. Interacts with ENO4. Interacts with QRICH2. In terms of processing, phosphorylated by STK33 during sperm flagella assembly. In terms of tissue distribution, testis specific; only expressed in round spermatids.

It is found in the cell projection. The protein localises to the cilium. Its subcellular location is the flagellum. Its function is as follows. Major structural component of sperm fibrous sheath. Plays a role in sperm motility. The protein is A-kinase anchor protein 4 of Homo sapiens (Human).